Consider the following 299-residue polypeptide: Oxygen-dependent coproporphyrinogen-III oxidase (299 aa).

Position 92 (Ser92) interacts with substrate. The a divalent metal cation site is built by His96 and His106. Residue His106 is the Proton donor of the active site. Residue 108–110 coordinates substrate; it reads NVR. His145 and His175 together coordinate a divalent metal cation. Residues 240–275 form an important for dimerization region; that stretch reads YVEFNLVWDRGTLFGLQTGGRTESILMSMPPLVRWE. Residue 258–260 coordinates substrate; it reads GGR.

The protein belongs to the aerobic coproporphyrinogen-III oxidase family. Homodimer. A divalent metal cation serves as cofactor.

Its subcellular location is the cytoplasm. The enzyme catalyses coproporphyrinogen III + O2 + 2 H(+) = protoporphyrinogen IX + 2 CO2 + 2 H2O. It participates in porphyrin-containing compound metabolism; protoporphyrin-IX biosynthesis; protoporphyrinogen-IX from coproporphyrinogen-III (O2 route): step 1/1. In terms of biological role, involved in the heme biosynthesis. Catalyzes the aerobic oxidative decarboxylation of propionate groups of rings A and B of coproporphyrinogen-III to yield the vinyl groups in protoporphyrinogen-IX. The protein is Oxygen-dependent coproporphyrinogen-III oxidase of Shigella dysenteriae serotype 1 (strain Sd197).